Consider the following 375-residue polypeptide: MQKLQIFVYIYLFMLTVAGPVDLNENSEQKENVEKKGLCNACLWRQNNKSSRLEAIKIQILSKLRLETAPNISKDAIRQLLPKAPPLRELIDQYDVQRDDSSDGSLEDDDYHVTTETVITMPTESDFLAEVQEKPKCCFFKFSSKIQHNKVIKAQLWIYLRPVKTPTTVFVQILRLIKPMKDGTRYTGIRSLKLDMNPGTGIWQSIDVKTVLQNWLKQPESNLGIEIKALDENGHDLAVTFPEPGEEGLNPFLEVKVTDTPKRARRDFGLDCDEHSTESRCCRYPLTVDFEAFGWDWIIAPKRYKANYCSGECEFLFLQKYPHTHLVHQANPKGSAGPCCTPTKMSPINMLYFNGKEQIIYGKIPGMVVDRCGCS.

Positions 1-18 (MQKLQIFVYIYLFMLTVA) are cleaved as a signal peptide. Residues 19 to 266 (GPVDLNENSE…VTDTPKRARR (248 aa)) constitute a propeptide that is removed on maturation. N-linked (GlcNAc...) asparagine glycans are attached at residues Asn48 and Asn71. Cystine bridges form between Cys272–Cys282, Cys281–Cys340, Cys309–Cys372, and Cys313–Cys374.

Belongs to the TGF-beta family. Homodimer; disulfide-linked. Interacts with WFIKKN2, leading to inhibit its activity. Interacts with FSTL3. Post-translationally, synthesized as large precursor molecule that undergoes proteolytic cleavage to generate an N-terminal propeptide and a disulfide linked C-terminal dimer, which is the biologically active molecule. The circulating form consists of a latent complex of the C-terminal dimer and other proteins, including its propeptide, which maintain the C-terminal dimer in a latent, inactive state. Ligand activation requires additional cleavage of the prodomain by a tolloid-like metalloproteinase.

Its subcellular location is the secreted. Acts specifically as a negative regulator of skeletal muscle growth. The chain is Growth/differentiation factor 8 (MSTN) from Sylvicapra grimmia (Grey duiker).